The chain runs to 69 residues: MKALVLGLLRVYRYAISPMLGRNCRFHPCCSEYAQEAVERHGAMRGGWLALKRVGRCHPFHPGGYDPVP.

Belongs to the UPF0161 family.

The protein localises to the cell inner membrane. Could be involved in insertion of integral membrane proteins into the membrane. This Aromatoleum aromaticum (strain DSM 19018 / LMG 30748 / EbN1) (Azoarcus sp. (strain EbN1)) protein is Putative membrane protein insertion efficiency factor.